The primary structure comprises 120 residues: U13-lycotoxin-Ls1a (120 aa).

An N-terminal signal peptide occupies residues 1 to 16 (MKTLFVLISILYAVYC). A propeptide spanning residues 17 to 54 (FSSEEDVDSAYLANELEPVEDINSEQYAALEPKEEQER) is cleaved from the precursor. Cystine bridges form between cysteine 56/cysteine 70, cysteine 63/cysteine 76, cysteine 69/cysteine 87, and cysteine 78/cysteine 85. The region spanning 56 to 95 (CADMGQDCKDDCDCCLNIATCNCWFGRYFCSCTFGDYQTC) is the Agouti domain.

This sequence belongs to the neurotoxin 05 (agouti) family. Post-translationally, contains 6 disulfide bonds. As to expression, expressed by the venom gland.

It is found in the secreted. This Lycosa singoriensis (Wolf spider) protein is U13-lycotoxin-Ls1a.